We begin with the raw amino-acid sequence, 108 residues long: Insulin-like peptide 17 (108 aa).

Residues 1–19 (MFSTRGVLLLLSLMAAVAA) form the signal peptide.

It belongs to the insulin family. As to expression, expressed in head neurons and the uterus.

The protein localises to the secreted. In terms of biological role, involved in the regulation of the larval diapause. The sequence is that of Insulin-like peptide 17 from Caenorhabditis elegans.